The sequence spans 221 residues: Deoxyribose-phosphate aldolase (221 aa).

The active-site Proton donor/acceptor is Asp96. Residue Lys157 is the Schiff-base intermediate with acetaldehyde of the active site. Lys185 acts as the Proton donor/acceptor in catalysis.

The protein belongs to the DeoC/FbaB aldolase family. DeoC type 1 subfamily.

Its subcellular location is the cytoplasm. The catalysed reaction is 2-deoxy-D-ribose 5-phosphate = D-glyceraldehyde 3-phosphate + acetaldehyde. It participates in carbohydrate degradation; 2-deoxy-D-ribose 1-phosphate degradation; D-glyceraldehyde 3-phosphate and acetaldehyde from 2-deoxy-alpha-D-ribose 1-phosphate: step 2/2. Its function is as follows. Catalyzes a reversible aldol reaction between acetaldehyde and D-glyceraldehyde 3-phosphate to generate 2-deoxy-D-ribose 5-phosphate. The polypeptide is Deoxyribose-phosphate aldolase (Crocosphaera subtropica (strain ATCC 51142 / BH68) (Cyanothece sp. (strain ATCC 51142))).